We begin with the raw amino-acid sequence, 581 residues long: Zinc finger protein 319 (581 aa).

The span at 1–22 (MSESWQQPPQTQPQQPQAPQPQ) shows a compositional bias: low complexity. The disordered stretch occupies residues 1 to 39 (MSESWQQPPQTQPQQPQAPQPQHHAETPPALAEHTLPPG). The C2H2-type 1 zinc-finger motif lies at 75 to 99 (PKCGVCGHDLAHLSSPHEHQCLAGH). The C2H2-type 2; degenerate zinc-finger motif lies at 103 to 125 (FQCTQCLKIFHQATDLLEHQCVQ). Lys129 is covalently cross-linked (Glycyl lysine isopeptide (Lys-Gly) (interchain with G-Cter in SUMO2)). 4 C2H2-type zinc fingers span residues 131-153 (FVCG…HSSH), 201-223 (YSCP…ERIH), 229-251 (YKCT…KRTH), and 257-279 (YKCA…MYAH). Ser280 carries the phosphoserine modification. The C2H2-type 7; degenerate zinc finger occupies 286–308 (FRCNVCELHFKESSELLQHPCTP). C2H2-type zinc fingers lie at residues 314–336 (FRCG…ERTH), 342–364 (FKCD…RRTH), and 370–392 (FKCG…QHVH). Residues 398-420 (FKCPVCQKGFDQSAELLRHKCLP) form a C2H2-type 11; degenerate zinc finger. The segment at 427–449 (FKCPVCNKAYKRASALQKHQLSH) adopts a C2H2-type 12 zinc-finger fold. The C2H2-type 13; degenerate zinc finger occupies 457–479 (LRCTLCERRFFSSSEFVQHRCDP). 3 C2H2-type zinc fingers span residues 485-507 (LKCP…RRVH), 513-535 (YKCP…QGVH), and 541-563 (FKCV…SAQH).

Belongs to the krueppel C2H2-type zinc-finger protein family.

It is found in the nucleus. Functionally, may be involved in transcriptional regulation. This is Zinc finger protein 319 (Znf319) from Mus musculus (Mouse).